Here is a 133-residue protein sequence, read N- to C-terminus: Small ribosomal subunit protein uS9 (133 aa).

The protein belongs to the universal ribosomal protein uS9 family.

The protein is Small ribosomal subunit protein uS9 of Picrophilus torridus (strain ATCC 700027 / DSM 9790 / JCM 10055 / NBRC 100828 / KAW 2/3).